We begin with the raw amino-acid sequence, 279 residues long: Formamidopyrimidine-DNA glycosylase (279 aa).

The active-site Schiff-base intermediate with DNA is the Pro2. The active-site Proton donor is the Glu3. The active-site Proton donor; for beta-elimination activity is Lys57. DNA-binding residues include His90, Arg109, and Arg151. The FPG-type zinc-finger motif lies at 236–270; it reads FVYGRTGQPCRVCQTPIAVLRLGQRSTFYCPACQQ. Arg260 (proton donor; for delta-elimination activity) is an active-site residue.

Belongs to the FPG family. Monomer. Zn(2+) is required as a cofactor.

It catalyses the reaction Hydrolysis of DNA containing ring-opened 7-methylguanine residues, releasing 2,6-diamino-4-hydroxy-5-(N-methyl)formamidopyrimidine.. The catalysed reaction is 2'-deoxyribonucleotide-(2'-deoxyribose 5'-phosphate)-2'-deoxyribonucleotide-DNA = a 3'-end 2'-deoxyribonucleotide-(2,3-dehydro-2,3-deoxyribose 5'-phosphate)-DNA + a 5'-end 5'-phospho-2'-deoxyribonucleoside-DNA + H(+). In terms of biological role, involved in base excision repair of DNA damaged by oxidation or by mutagenic agents. Acts as a DNA glycosylase that recognizes and removes damaged bases. Has a preference for oxidized purines, such as 7,8-dihydro-8-oxoguanine (8-oxoG). Has AP (apurinic/apyrimidinic) lyase activity and introduces nicks in the DNA strand. Cleaves the DNA backbone by beta-delta elimination to generate a single-strand break at the site of the removed base with both 3'- and 5'-phosphates. This is Formamidopyrimidine-DNA glycosylase from Methylobacillus flagellatus (strain ATCC 51484 / DSM 6875 / VKM B-1610 / KT).